The primary structure comprises 311 residues: Aspartate carbamoyltransferase catalytic subunit (311 aa).

Arg-58 and Thr-59 together coordinate carbamoyl phosphate. Lys-86 is an L-aspartate binding site. Carbamoyl phosphate-binding residues include Arg-108, His-136, and Gln-139. Positions 169 and 223 each coordinate L-aspartate. Carbamoyl phosphate is bound by residues Gly-264 and Pro-265.

It belongs to the aspartate/ornithine carbamoyltransferase superfamily. ATCase family. As to quaternary structure, heterododecamer (2C3:3R2) of six catalytic PyrB chains organized as two trimers (C3), and six regulatory PyrI chains organized as three dimers (R2).

The catalysed reaction is carbamoyl phosphate + L-aspartate = N-carbamoyl-L-aspartate + phosphate + H(+). It functions in the pathway pyrimidine metabolism; UMP biosynthesis via de novo pathway; (S)-dihydroorotate from bicarbonate: step 2/3. Its function is as follows. Catalyzes the condensation of carbamoyl phosphate and aspartate to form carbamoyl aspartate and inorganic phosphate, the committed step in the de novo pyrimidine nucleotide biosynthesis pathway. This Desulfosudis oleivorans (strain DSM 6200 / JCM 39069 / Hxd3) (Desulfococcus oleovorans) protein is Aspartate carbamoyltransferase catalytic subunit.